Consider the following 279-residue polypeptide: GATA transcription factor 15 (279 aa).

The segment at 52-94 (AYDDHSTVTTSPSSPSSSSTGSVDCTLSLGTPSSRRAEPVAAA) is disordered. The segment covering 58–74 (TVTTSPSSPSSSSTGSV) has biased composition (low complexity). Residues 154–179 (CANCGTASTPLWRNGPRGPKSLCNAC) form a GATA-type zinc finger.

This sequence belongs to the type IV zinc-finger family. Class B subfamily. Highly expressed in inflorescences. Expressed in vascular bundles of root stele within the elongation zones, of elongating upper internodes and of the junctions of leaf blades and sheaths.

Probable transcription factor that regulates organogenesis during transition from the vegetative to the reproductive phase. Regulates the expression of CYP78A11/PLA1, HD3A and MADS1 during reproductive development in rice. May act upstream of CYP78A11/PLA1 during panicle development. Acts independently of the photoperiodic and gibberellin signaling pathways. The sequence is that of GATA transcription factor 15 from Oryza sativa subsp. japonica (Rice).